The following is a 470-amino-acid chain: Putative gustatory receptor 28b (470 aa).

The Cytoplasmic segment spans residues 1 to 76 (MDIEMAKEPV…KTGKKAIKKT (76 aa)). Residues 77–97 (IFGYINGIMHIAMFVFAYSLT) traverse the membrane as a helical segment. At 98–119 (IYNNCESVASYFFRSRITYFGD) the chain is on the extracellular side. Residues 120-140 (LMQIVSGFIGVTVIYLTAFVP) traverse the membrane as a helical segment. The Cytoplasmic segment spans residues 141 to 175 (NHRLERCLQKFHTMDVQLQTVGVKIMYSKVLRFSY). The chain crosses the membrane as a helical span at residues 176–196 (MVLISMFLVNVLFTGGTFSVL). The Extracellular portion of the chain corresponds to 197 to 204 (YSSEVAPT). A helical transmembrane segment spans residues 205–225 (MALHFTFLIQHTVIAIAIALF). Residues 226-309 (SCFTYLVEMR…ATANKYFTYQ (84 aa)) are Cytoplasmic-facing. Residues 310 to 330 (LLTIISIAFLIIVFDAYYVLE) traverse the membrane as a helical segment. Topologically, residues 331-346 (TLLGKSKRESKFKTVE) are extracellular. The helical transmembrane segment at 347–367 (FVTFFSCQMILYLIAIISIVE) threads the bilayer. Topologically, residues 368–423 (GSNRAIKKSEKTGGIVHSLLNKTKSAEVKEKLQQFSMQLMHLKINFTAAGLFNIDR) are cytoplasmic. The helical transmembrane segment at 424-444 (TLYFTISGALTTYLIILLQFT) threads the bilayer. The Extracellular portion of the chain corresponds to 445–470 (SNSPNNGYGNGSSCCETFNNMTNHTL). N-linked (GlcNAc...) asparagine glycans are attached at residues Asn454, Asn464, and Asn467.

It belongs to the insect chemoreceptor superfamily. Gustatory receptor (GR) family. Gr66a subfamily. Isoforms A and E have taste neuron-specific expression restricted to the labial palps, the internal taste organs in the pharynx, and the legs. In addition to expression in a large number of taste neurons, isoform A is also expressed in a few nonchemosensory neurons, including the campaniform sensilla of the wing, leg stretch receptors, and multiple dendritic neurons in the abdomen. Isoform B is the only receptor not expressed in gustatory receptor neurons in the labellum. We observe expression of this receptor in a single large cell at the base of each maxillary palp, in campaniform sensilla of the wing, and multiple dendritic neurons in the abdomen. Isoform C is expressed by many gustatory receptor neurons in the labial palps, the pharyngeal taste clusters, and taste neurons in the legs. In addition, isoform C expressed in a single cell at the base of the maxillary palps, neurons in the Johnston's organ (JO), campaniform sensilla of the wing, stretch receptors and the femoral chordotonal organ of the legs, and multiple dendritic neurons in the abdomen. Isoform D is expressed in a small number of gustatory receptor neurons in the labial palps, the ventral cibarial sense organ (VCSO), and legs. Atypical expression is observed in three neurons in the arista, campaniform sensilla of the wing, stretch and femoral chordotonal organ receptors in the legs, and multiple dendritic neurons in the abdomen. In larvae, Isoform A is expressed in neurons of the terminal external chemosensory organ and the dorsal external chemosensory organ; and isoform E is expressed in neurons of the terminal external chemosensory organ.

Its subcellular location is the cell membrane. In terms of biological role, probable gustatory receptor which mediates acceptance or avoidance behavior, depending on its substrates. Atypical expression also suggests nongustatory roles in the nervous system and tissues involved in proprioception, hygroreception, and other sensory modalities. It is also possible that it has chemosensory roles in the detection of internal ligands. The protein is Putative gustatory receptor 28b (Gr28b) of Drosophila melanogaster (Fruit fly).